A 459-amino-acid polypeptide reads, in one-letter code: Putative metabolite transport protein YdjK (459 aa).

The Cytoplasmic segment spans residues 1–25 (MEQITKPHCGARLDRLPDCRWHSSM). A helical membrane pass occupies residues 26–46 (FAIVAFGLLVCWSNAVGGLIL). Residues 47-60 (AQLKALGWTDNSTT) are Periplasmic-facing. The helical transmembrane segment at 61 to 81 (ATFSAITTAGMFLGALVGGII) threads the bilayer. Residues 82–90 (GDKTGRRNA) are Cytoplasmic-facing. The helical transmembrane segment at 91 to 111 (FILYEAIHIASMVVGAFSPNM) threads the bilayer. Residue Asp-112 is a topological domain, periplasmic. Residues 113–133 (FLIACRFVMGVGLGALLVTLF) form a helical membrane-spanning segment. Over 134–153 (AGFTEYMPGRNRGTWSSRVS) the chain is Cytoplasmic. The helical transmembrane segment at 154-174 (FIGNWSYPLCSLIAMGLTPLI) threads the bilayer. Over 175–181 (SAEWNWR) the chain is Periplasmic. The chain crosses the membrane as a helical span at residues 182–202 (VQLLIPAILSLIATALAWRYF). At 203-271 (PESPRWLESR…LLKRVILGSC (69 aa)) the chain is on the cytoplasmic side. The chain crosses the membrane as a helical span at residues 272 to 292 (VLIAMNVVQYTLINWLPTIFM). The Periplasmic portion of the chain corresponds to 293 to 301 (TQGINLKDS). The chain crosses the membrane as a helical span at residues 302–322 (IVLNTMSMFGAPFGIFIAMLV). Topologically, residues 323 to 329 (MDKIPRK) are cytoplasmic. Residues 330–350 (TMGVGLLILIAVLGYIYSLQT) traverse the membrane as a helical segment. Position 351 (Ser-351) is a topological domain, periplasmic. The helical transmembrane segment at 352-372 (MLLITLIGFFLITFVYMYVCY) threads the bilayer. Residues 373–399 (ASAVYVPEIWPTEAKLRGSGLANAVGR) are Cytoplasmic-facing. Transmembrane regions (helical) follow at residues 400-420 (ISGIAAPYAVAVLLSSYGVTG) and 421-441 (VFILLGAVSIIVAIAIATIGI). Over 442–459 (ETKGVSVESLSIDAVANK) the chain is Cytoplasmic.

It belongs to the major facilitator superfamily. Sugar transporter (TC 2.A.1.1) family.

It is found in the cell inner membrane. In Escherichia coli (strain K12), this protein is Putative metabolite transport protein YdjK (ydjK).